Here is an 83-residue protein sequence, read N- to C-terminus: MGYRAKGRRQPKADSVVAPPKRVSIKGLDYKDLASLKRFLSDRGKIRARRVTGASIQQQRQIAKAIKNAREMGVIPFKSGVSR.

It belongs to the bacterial ribosomal protein bS18 family. Part of the 30S ribosomal subunit. Forms a tight heterodimer with protein bS6.

Functionally, binds as a heterodimer with protein bS6 to the central domain of the 16S rRNA, where it helps stabilize the platform of the 30S subunit. The polypeptide is Small ribosomal subunit protein bS18 (Tropheryma whipplei (strain TW08/27) (Whipple's bacillus)).